A 406-amino-acid chain; its full sequence is Ascaroside receptor GPR2 (406 aa).

At 1–29 (MTQLPYLLDRRGGALAAPATAWGDMMLNR) the chain is on the extracellular side. The chain crosses the membrane as a helical span at residues 30-50 (ALFSVALLSSVGSAWVVLSYA). At 51–61 (CIKELRSYRHQ) the chain is on the cytoplasmic side. Residues 62–82 (LILGLAISDLLMSLNFMFSAG) traverse the membrane as a helical segment. Residues 83–107 (WNVAGGDLALEESRTACSVNGFLTQ) lie on the Extracellular side of the membrane. The cysteines at positions 99 and 173 are disulfide-linked. Residues 108–128 (VFVVQTDWWILVIAIATYIIL) form a helical membrane-spanning segment. Residues 129 to 143 (GNFKTQSQFIQTHVW) are Cytoplasmic-facing. A helical transmembrane segment spans residues 144–164 (IPWVGPWVLSIIIAAICHGVL). Residues 165-185 (GYGYIGGWCWLTSDLMRLLIN) lie on the Extracellular side of the membrane. A helical transmembrane segment spans residues 186–206 (FIPRWLIVIAIALIYIRLYMI). Over 207–326 (VRKARKWDIE…AAQLKRIAKK (120 aa)) the chain is Cytoplasmic. A helical membrane pass occupies residues 327–347 (MMVYPVAYAIIWACPTAIRIY). The Extracellular segment spans residues 348-356 (QGTTGSRAP). A helical transmembrane segment spans residues 357–377 (LWITIVDKSCIVIQGLVDAVV). Residues 378–406 (YGLNERAWQGWRDHIRRIIYKNEGGRIIG) lie on the Cytoplasmic side of the membrane.

This sequence belongs to the G-protein coupled receptor 1 family. Interacts with ascaroside receptor GPR3; may form a functional heterodimer. Interacts with guanine nucleotide-binding protein alpha GPA2; to activate adenylate cyclase and positively regulate nematode trap formation.

It is found in the cell membrane. Functionally, g protein-coupled receptor that senses nematode ascaroside pheromones and signals via adenylate cyclase to positively regulate trap formation for nematode capture. The chain is Ascaroside receptor GPR2 from Arthrobotrys oligospora (strain ATCC 24927 / CBS 115.81 / DSM 1491) (Nematode-trapping fungus).